Consider the following 676-residue polypeptide: Pentatricopeptide repeat-containing protein ATP4 homolog, chloroplastic (676 aa).

A chloroplast-targeting transit peptide spans 1–73 (MASPSSLLSW…NSPRAAGLAR (73 aa)). Residues 17–58 (LSFQPKNPSPSPATARVSVQDPPPPPSDANPSPGRSSNTSRY) are disordered. PPR repeat units lie at residues 148–182 (EVIL…GVQP), 183–217 (DNAT…GCSP), 218–252 (DMLT…KWQL), 253–287 (DPVI…GVKP), 288–322 (NLVV…EAVP), 323–353 (NKAT…MKDE), 358–388 (DVVL…MKAS), 396–430 (DSWS…GFKP), 431–465 (NIFI…GITP), and 532–566 (RMPY…GIYS). In terms of domain architecture, Smr spans 578–662 (LHLRGLSVGA…WFLTTSVAAR (85 aa)).

This sequence belongs to the PPR family. P subfamily.

It localises to the plastid. The protein resides in the chloroplast. In terms of biological role, involved in translation and accumulation of chloroplast ATP synthase subunits. This chain is Pentatricopeptide repeat-containing protein ATP4 homolog, chloroplastic, found in Oryza sativa subsp. japonica (Rice).